Here is a 218-residue protein sequence, read N- to C-terminus: Glycerol-3-phosphate acyltransferase 2 (218 aa).

5 helical membrane passes run 6–26, 50–70, 85–105, 115–135, and 159–179; these read YLLI…VLVG, VMGP…GTLA, LLLI…FLKF, AGVF…VFLP, and FWFH…LLFV.

This sequence belongs to the PlsY family. Probably interacts with PlsX.

The protein resides in the cell membrane. It carries out the reaction an acyl phosphate + sn-glycerol 3-phosphate = a 1-acyl-sn-glycero-3-phosphate + phosphate. It functions in the pathway lipid metabolism; phospholipid metabolism. Catalyzes the transfer of an acyl group from acyl-phosphate (acyl-PO(4)) to glycerol-3-phosphate (G3P) to form lysophosphatidic acid (LPA). This enzyme utilizes acyl-phosphate as fatty acyl donor, but not acyl-CoA or acyl-ACP. In Lactobacillus johnsonii (strain CNCM I-12250 / La1 / NCC 533), this protein is Glycerol-3-phosphate acyltransferase 2.